Reading from the N-terminus, the 121-residue chain is UPF0091 protein PH1428 (121 aa).

The protein belongs to the UPF0091 family.

The chain is UPF0091 protein PH1428 from Pyrococcus horikoshii (strain ATCC 700860 / DSM 12428 / JCM 9974 / NBRC 100139 / OT-3).